A 173-amino-acid polypeptide reads, in one-letter code: Crossover junction endodeoxyribonuclease RuvC (173 aa).

Residues D8, E69, and D141 contribute to the active site. Mg(2+) is bound by residues D8, E69, and D141.

Belongs to the RuvC family. As to quaternary structure, homodimer which binds Holliday junction (HJ) DNA. The HJ becomes 2-fold symmetrical on binding to RuvC with unstacked arms; it has a different conformation from HJ DNA in complex with RuvA. In the full resolvosome a probable DNA-RuvA(4)-RuvB(12)-RuvC(2) complex forms which resolves the HJ. It depends on Mg(2+) as a cofactor.

Its subcellular location is the cytoplasm. The enzyme catalyses Endonucleolytic cleavage at a junction such as a reciprocal single-stranded crossover between two homologous DNA duplexes (Holliday junction).. Its function is as follows. The RuvA-RuvB-RuvC complex processes Holliday junction (HJ) DNA during genetic recombination and DNA repair. Endonuclease that resolves HJ intermediates. Cleaves cruciform DNA by making single-stranded nicks across the HJ at symmetrical positions within the homologous arms, yielding a 5'-phosphate and a 3'-hydroxyl group; requires a central core of homology in the junction. The consensus cleavage sequence is 5'-(A/T)TT(C/G)-3'. Cleavage occurs on the 3'-side of the TT dinucleotide at the point of strand exchange. HJ branch migration catalyzed by RuvA-RuvB allows RuvC to scan DNA until it finds its consensus sequence, where it cleaves and resolves the cruciform DNA. In Stenotrophomonas maltophilia (strain K279a), this protein is Crossover junction endodeoxyribonuclease RuvC.